The sequence spans 570 residues: Urease subunit alpha (570 aa).

The region spanning 131–570 is the Urease domain; sequence GGFDSHIHFI…LPMAQRYFLF (440 aa). Ni(2+) contacts are provided by His136, His138, and Lys219. Lys219 is modified (N6-carboxylysine). His221 lines the substrate pocket. Ni(2+)-binding residues include His248 and His274. His322 serves as the catalytic Proton donor. Asp362 is a binding site for Ni(2+).

Belongs to the metallo-dependent hydrolases superfamily. Urease alpha subunit family. In terms of assembly, heterotrimer of UreA (gamma), UreB (beta) and UreC (alpha) subunits. Three heterotrimers associate to form the active enzyme. It depends on Ni cation as a cofactor. Carboxylation allows a single lysine to coordinate two nickel ions.

It is found in the cytoplasm. It carries out the reaction urea + 2 H2O + H(+) = hydrogencarbonate + 2 NH4(+). It participates in nitrogen metabolism; urea degradation; CO(2) and NH(3) from urea (urease route): step 1/1. In Beijerinckia indica subsp. indica (strain ATCC 9039 / DSM 1715 / NCIMB 8712), this protein is Urease subunit alpha.